Consider the following 431-residue polypeptide: Divergent protein kinase domain 1B (431 aa).

At 1 to 30 (MRRLRRLVHLVLLCPFSKGLQGRLPGLRVK) the chain is on the cytoplasmic side. The short motif at 5–6 (RR) is the May mediate ER retention element. A helical membrane pass occupies residues 31–51 (YVLLVWLGIFVGSWMVYVHYS). Topologically, residues 52 to 431 (SYSELCRGHV…WREISNTNYS (380 aa)) are lumenal. 2 disulfide bridges follow: cysteine 57–cysteine 94 and cysteine 62–cysteine 117.

It belongs to the DIPK family. Post-translationally, among the many cysteines in the lumenal domain, most are probably involved in disulfide bonds.

The protein localises to the endoplasmic reticulum membrane. In Rattus norvegicus (Rat), this protein is Divergent protein kinase domain 1B.